The following is a 257-amino-acid chain: Pyridoxine 5'-phosphate synthase (257 aa).

3-amino-2-oxopropyl phosphate is bound at residue Asn6. A 1-deoxy-D-xylulose 5-phosphate-binding site is contributed by Asp8–His9. Arg17 serves as a coordination point for 3-amino-2-oxopropyl phosphate. Catalysis depends on His42, which acts as the Proton acceptor. Arg44 and His49 together coordinate 1-deoxy-D-xylulose 5-phosphate. Glu69 functions as the Proton acceptor in the catalytic mechanism. Thr99 is a 1-deoxy-D-xylulose 5-phosphate binding site. Catalysis depends on His211, which acts as the Proton donor. 3-amino-2-oxopropyl phosphate-binding positions include Gly212 and Gly233 to Gln234.

This sequence belongs to the PNP synthase family. Homooctamer; tetramer of dimers.

The protein resides in the cytoplasm. The catalysed reaction is 3-amino-2-oxopropyl phosphate + 1-deoxy-D-xylulose 5-phosphate = pyridoxine 5'-phosphate + phosphate + 2 H2O + H(+). It participates in cofactor biosynthesis; pyridoxine 5'-phosphate biosynthesis; pyridoxine 5'-phosphate from D-erythrose 4-phosphate: step 5/5. In terms of biological role, catalyzes the complicated ring closure reaction between the two acyclic compounds 1-deoxy-D-xylulose-5-phosphate (DXP) and 3-amino-2-oxopropyl phosphate (1-amino-acetone-3-phosphate or AAP) to form pyridoxine 5'-phosphate (PNP) and inorganic phosphate. The polypeptide is Pyridoxine 5'-phosphate synthase (Campylobacter fetus subsp. fetus (strain 82-40)).